Reading from the N-terminus, the 635-residue chain is Chaperone protein HtpG (635 aa).

The a; substrate-binding stretch occupies residues 1 to 346 (MSQTTTTSAS…SADLPLNVSR (346 aa)). A b region spans residues 347 to 563 (EILQESRDVR…QNELSPHLLR (217 aa)). The segment at 564-635 (MLKAAGQEAP…KRLNGLLLKA (72 aa)) is c.

It belongs to the heat shock protein 90 family. In terms of assembly, homodimer.

Its subcellular location is the cytoplasm. Functionally, molecular chaperone. Has ATPase activity. The chain is Chaperone protein HtpG from Bordetella pertussis (strain Tohama I / ATCC BAA-589 / NCTC 13251).